The chain runs to 411 residues: Imidazolonepropionase (411 aa).

2 residues coordinate Fe(3+): H75 and H77. Residues H75 and H77 each contribute to the Zn(2+) site. 4-imidazolone-5-propanoate-binding residues include R84, Y147, and H180. N-formimidoyl-L-glutamate is bound at residue Y147. H245 is a binding site for Fe(3+). H245 contributes to the Zn(2+) binding site. Q248 provides a ligand contact to 4-imidazolone-5-propanoate. Position 320 (D320) interacts with Fe(3+). A Zn(2+)-binding site is contributed by D320. N-formimidoyl-L-glutamate-binding residues include N322 and G324. T325 contributes to the 4-imidazolone-5-propanoate binding site.

The protein belongs to the metallo-dependent hydrolases superfamily. HutI family. Requires Zn(2+) as cofactor. It depends on Fe(3+) as a cofactor.

Its subcellular location is the cytoplasm. The catalysed reaction is 4-imidazolone-5-propanoate + H2O = N-formimidoyl-L-glutamate. The protein operates within amino-acid degradation; L-histidine degradation into L-glutamate; N-formimidoyl-L-glutamate from L-histidine: step 3/3. Its function is as follows. Catalyzes the hydrolytic cleavage of the carbon-nitrogen bond in imidazolone-5-propanoate to yield N-formimidoyl-L-glutamate. It is the third step in the universal histidine degradation pathway. In Aeromonas salmonicida (strain A449), this protein is Imidazolonepropionase.